The sequence spans 543 residues: MAKDIKFDIEARDGLKRGVDALANAVKVTLGPKGRNVIIGKSFGGPTVTKDGVSVAKEIELKDPLENMGAQMVKEVASKTNDLAGDGTTTATVLAQAIVKEGLKNVAAGANPMDLKRGIDKAVETIVADLAKQAKVVGSDSDKIQQIASISANNDEVIGELIATAFAKVGKEGVITVEEAKGTDTFVDVVEGMQFDRGYLSPYFVTNPEKMEVELDSPYILLYDKKVSSLKELLPVLEPVAQSGKPLLIIAEDVDGEALSTLVVNKLRGALKIAAVKAPGFGDRRKAMLEDIAILTGGTVISEERGYTLENTTIEMLGNAKRVSIDKDNTTIVSGAGEADIIKNRVNQIKGQMETTTSDYDKEKLQERLAKLAGGVAVLYVGAASEVEMKEKKDRVDDALHATRAAVEEGIVAGGGVALLRAKLALADLKADNADEATGIQIVSRAIEAPLRTIVENAGLEGSVVVAKVAEGSGDFGYNAKTDEYVDMLKAGIIDPKKVTRVALENAASVSGMILTTECALIDIKEENAGGGMPMGGGMPGMM.

ATP contacts are provided by residues 29 to 32 (TLGP), lysine 50, 86 to 90 (DGTTT), glycine 415, and aspartate 495.

This sequence belongs to the chaperonin (HSP60) family. In terms of assembly, forms a cylinder of 14 subunits composed of two heptameric rings stacked back-to-back. Interacts with the co-chaperonin GroES.

It localises to the cytoplasm. The catalysed reaction is ATP + H2O + a folded polypeptide = ADP + phosphate + an unfolded polypeptide.. In terms of biological role, together with its co-chaperonin GroES, plays an essential role in assisting protein folding. The GroEL-GroES system forms a nano-cage that allows encapsulation of the non-native substrate proteins and provides a physical environment optimized to promote and accelerate protein folding. This chain is Chaperonin GroEL, found in Flavobacterium johnsoniae (strain ATCC 17061 / DSM 2064 / JCM 8514 / BCRC 14874 / CCUG 350202 / NBRC 14942 / NCIMB 11054 / UW101) (Cytophaga johnsonae).